Here is a 154-residue protein sequence, read N- to C-terminus: Large ribosomal subunit protein uL13 (154 aa).

This sequence belongs to the universal ribosomal protein uL13 family. In terms of assembly, part of the 50S ribosomal subunit.

This protein is one of the early assembly proteins of the 50S ribosomal subunit, although it is not seen to bind rRNA by itself. It is important during the early stages of 50S assembly. This chain is Large ribosomal subunit protein uL13, found in Rhodospirillum rubrum (strain ATCC 11170 / ATH 1.1.1 / DSM 467 / LMG 4362 / NCIMB 8255 / S1).